The following is a 62-amino-acid chain: Photosystem II reaction center protein Z (62 aa).

2 consecutive transmembrane segments (helical) span residues 8–28 (ALLLLVVMSFVLIVGVPVLYA) and 41–61 (LVGGLAWTALVVLVGVLNYFV).

Belongs to the PsbZ family. In terms of assembly, PSII is composed of 1 copy each of membrane proteins PsbA, PsbB, PsbC, PsbD, PsbE, PsbF, PsbH, PsbI, PsbJ, PsbK, PsbL, PsbM, PsbT, PsbX, PsbY, PsbZ, Psb30/Ycf12, peripheral proteins PsbO, CyanoQ (PsbQ), PsbU, PsbV and a large number of cofactors. It forms dimeric complexes.

The protein resides in the cellular thylakoid membrane. Its function is as follows. May control the interaction of photosystem II (PSII) cores with the light-harvesting antenna, regulates electron flow through the 2 photosystem reaction centers. PSII is a light-driven water plastoquinone oxidoreductase, using light energy to abstract electrons from H(2)O, generating a proton gradient subsequently used for ATP formation. In Synechococcus elongatus (strain ATCC 33912 / PCC 7942 / FACHB-805) (Anacystis nidulans R2), this protein is Photosystem II reaction center protein Z.